We begin with the raw amino-acid sequence, 348 residues long: Protein RecA (348 aa).

66–73 contacts ATP; it reads GPESSGKT.

The protein belongs to the RecA family.

The protein localises to the cytoplasm. Its function is as follows. Can catalyze the hydrolysis of ATP in the presence of single-stranded DNA, the ATP-dependent uptake of single-stranded DNA by duplex DNA, and the ATP-dependent hybridization of homologous single-stranded DNAs. It interacts with LexA causing its activation and leading to its autocatalytic cleavage. In Burkholderia lata (strain ATCC 17760 / DSM 23089 / LMG 22485 / NCIMB 9086 / R18194 / 383), this protein is Protein RecA.